A 95-amino-acid chain; its full sequence is Transcription and mRNA export factor ENY2-1 (95 aa).

This sequence belongs to the ENY2 family. As to quaternary structure, component of the nuclear pore complex (NPC)-associated TREX-2 complex (transcription and export complex 2). Component of the SAGA transcription coactivator-HAT complex. Within the SAGA complex, participates in a subcomplex of SAGA called the DUB module (deubiquitination module).

The protein localises to the nucleus. It localises to the nucleoplasm. Involved in mRNA export coupled transcription activation by association with both the TREX-2 and the SAGA complexes. The transcription regulatory histone acetylation (HAT) complex SAGA is a multiprotein complex that activates transcription by remodeling chromatin and mediating histone acetylation and deubiquitination. Within the SAGA complex, participates in a subcomplex that specifically deubiquitinates histones. The SAGA complex is recruited to specific gene promoters by activators, where it is required for transcription. The TREX-2 complex functions in docking export-competent ribonucleoprotein particles (mRNPs) to the nuclear entrance of the nuclear pore complex (nuclear basket). TREX-2 participates in mRNA export and accurate chromatin positioning in the nucleus by tethering genes to the nuclear periphery. This Salmo salar (Atlantic salmon) protein is Transcription and mRNA export factor ENY2-1 (eny2-1).